The primary structure comprises 513 residues: ABC transporter H family member 2 (513 aa).

In terms of domain architecture, ABC transporter spans Leu39–Cys280. Residue Gly75–Thr82 coordinates ATP. A disordered region spans residues Val291–Asn471. Residues Ser324–Ser360 show a composition bias toward low complexity. Polar residues predominate over residues Val361–Phe386. The span at Asn387–Asn471 shows a compositional bias: low complexity.

This sequence belongs to the ABC transporter superfamily.

This Dictyostelium discoideum (Social amoeba) protein is ABC transporter H family member 2 (abcH2).